Here is a 215-residue protein sequence, read N- to C-terminus: MKIIVTGFDPFGGEPINPALETIKSLPKTIAGAEIILVEIPTVFDKAADVLEEKMAEHLPDAVLCIGQAGGRVDLTPERIAINQDDARIPDNEGQQPIDRTIREDGQPAYFSTLPIKAMVEAIHRIGLPASVSNTAGTFVCNHLMYQALYLAEKQFPKTKAGFLHIPFLPEQVVDKPGLASMSLNDIVRGVEVAIGAIVEYRDKEDIKKGGGSTH.

Active-site residues include Glu-78, Cys-141, and His-165.

It belongs to the peptidase C15 family. Homotetramer.

The protein resides in the cytoplasm. It carries out the reaction Release of an N-terminal pyroglutamyl group from a polypeptide, the second amino acid generally not being Pro.. Its function is as follows. Removes 5-oxoproline from various penultimate amino acid residues except L-proline. The chain is Pyrrolidone-carboxylate peptidase from Streptococcus suis (strain 98HAH33).